The sequence spans 298 residues: U1 small nuclear ribonucleoprotein A (298 aa).

2 consecutive RRM domains span residues 2–113 (SALY…KART) and 227–298 (KVLL…GFAK).

The protein belongs to the RRM U1 A/B'' family. As to quaternary structure, component of the spliceosome where it is associated with snRNP U1.

Its subcellular location is the nucleus. Involved in nuclear mRNA splicing. The principal role of the U1A is to help fold or maintain U1 RNA in an active configuration. It is the first snRNP to interact with pre-mRNA. This interaction is required for the subsequent binding of U2 snRNP and the U4/U6/U5 tri-snRNP. The sequence is that of U1 small nuclear ribonucleoprotein A (MUD1) from Saccharomyces cerevisiae (strain ATCC 204508 / S288c) (Baker's yeast).